An 813-amino-acid chain; its full sequence is LPS-assembly protein LptD (813 aa).

A signal peptide spans 1–22 (MRRALRLLPLPLSIAICLPAMA).

This sequence belongs to the LptD family. Component of the lipopolysaccharide transport and assembly complex. Interacts with LptE and LptA.

It is found in the cell outer membrane. Functionally, together with LptE, is involved in the assembly of lipopolysaccharide (LPS) at the surface of the outer membrane. The chain is LPS-assembly protein LptD from Xanthomonas oryzae pv. oryzae (strain MAFF 311018).